The chain runs to 90 residues: Cell division topological specificity factor (90 aa).

Belongs to the MinE family.

Its function is as follows. Prevents the cell division inhibition by proteins MinC and MinD at internal division sites while permitting inhibition at polar sites. This ensures cell division at the proper site by restricting the formation of a division septum at the midpoint of the long axis of the cell. The sequence is that of Cell division topological specificity factor from Brucella abortus (strain S19).